The following is a 421-amino-acid chain: Inhibitor of growth protein 3 (421 aa).

Residues 129-163 (PSQPVNNHHAHSHTPVEKRKYNPTSHHAAADHIPE) form a disordered region. Residues Lys148, Lys165, and Lys167 each participate in a glycyl lysine isopeptide (Lys-Gly) (interchain with G-Cter in SUMO2) cross-link. N6-acetyllysine is present on Lys181. Lys256 participates in a covalent cross-link: Glycyl lysine isopeptide (Lys-Gly) (interchain with G-Cter in SUMO2). Lys264 is subject to N6-acetyllysine. The segment covering 286–296 (TQNASSSATDS) has biased composition (polar residues). The segment at 286-323 (TQNASSSATDSRSGRKSKNNTKSSSQQSSSSSSSSSSS) is disordered. Low complexity predominate over residues 308–323 (SSSQQSSSSSSSSSSS). Residues 363–412 (PRYCICNQVSYGEMVGCDNQDCPIEWFHYGCVGLTEAPKGKWFCPQCTAA) form a PHD-type zinc finger. Cys366, Cys368, Cys379, Cys384, His390, Cys393, Cys406, and Cys409 together coordinate Zn(2+).

The protein belongs to the ING family. As to quaternary structure, interacts with H3K4me3 and to a lesser extent with H3K4me2. Component of the NuA4 histone acetyltransferase complex which contains the catalytic subunit KAT5/TIP60 and the subunits EP400, TRRAP/PAF400, BRD8/SMAP, EPC1, DMAP1/DNMAP1, RUVBL1/TIP49, RUVBL2, ING3, actin, ACTL6A/BAF53A, MORF4L1/MRG15, MORF4L2/MRGX, MRGBP, YEATS4/GAS41, VPS72/YL1 and MEAF6. The NuA4 complex interacts with MYC. HTATTIP/TIP60, EPC1, and ING3 together constitute a minimal HAT complex termed Piccolo NuA4. Component of a SWR1-like complex.

It localises to the nucleus. Functionally, component of the NuA4 histone acetyltransferase (HAT) complex which is involved in transcriptional activation of select genes principally by acetylation of nucleosomal histones H4 and H2A. This modification may both alter nucleosome - DNA interactions and promote interaction of the modified histones with other proteins which positively regulate transcription. This complex may be required for the activation of transcriptional programs associated with oncogene and proto-oncogene mediated growth induction, tumor suppressor mediated growth arrest and replicative senescence, apoptosis, and DNA repair. NuA4 may also play a direct role in DNA repair when directly recruited to sites of DNA damage. Component of a SWR1-like complex that specifically mediates the removal of histone H2A.Z/H2AZ1 from the nucleosome. The chain is Inhibitor of growth protein 3 (Ing3) from Mus musculus (Mouse).